The following is a 483-amino-acid chain: GTPase Der (483 aa).

EngA-type G domains follow at residues 3–167 (FTLA…GEER) and 212–387 (LRIA…EIWN). Residues 9-16 (GRPNVGKS), 56-60 (DTAGL), 119-122 (NKAE), 218-225 (GRPNAGKS), 265-269 (DTAGM), and 330-333 (NKWD) each bind GTP. The KH-like domain maps to 388-472 (RRISTGRLNR…PIRLSLRTSD (85 aa)).

Belongs to the TRAFAC class TrmE-Era-EngA-EngB-Septin-like GTPase superfamily. EngA (Der) GTPase family. As to quaternary structure, associates with the 50S ribosomal subunit.

Functionally, GTPase that plays an essential role in the late steps of ribosome biogenesis. The protein is GTPase Der of Brucella abortus (strain 2308).